The following is a 287-amino-acid chain: Protease HtpX homolog (287 aa).

2 helical membrane-spanning segments follow: residues 4–24 (VGLF…VMSL) and 35–53 (LLLM…SLAL). His139 serves as a coordination point for Zn(2+). The active site involves Glu140. His143 provides a ligand contact to Zn(2+). 2 helical membrane passes run 147–167 (GDMV…IFLS) and 194–214 (AVSM…VMWF). Position 219 (Glu219) interacts with Zn(2+).

Belongs to the peptidase M48B family. Zn(2+) serves as cofactor.

Its subcellular location is the cell inner membrane. The chain is Protease HtpX homolog from Desulfotalea psychrophila (strain LSv54 / DSM 12343).